The sequence spans 188 residues: MEIISLKRFILLTVATSSFLTSNTFCTDEFMMPHFHSKEGDGKYSQLRGIPKGEKERSVSFQELKDWGAKNVIKMSPAPANKVPHSAANLPLRFGRTIDEKRSPAARVNMEAGTRSHFPSLPQRFGRTTARSPKTPADLPQKPLHSLGSSELLYVMICQHQEIQSPGGKRTRRGAFVETDDAERKPEK.

The signal sequence occupies residues 1–26 (MEIISLKRFILLTVATSSFLTSNTFC). A propeptide spanning residues 27-57 (TDEFMMPHFHSKEGDGKYSQLRGIPKGEKER) is cleaved from the precursor. Phe94 carries the phenylalanine amide modification. Positions 97–106 (TIDEKRSPAA) are excised as a propeptide. 2 disordered regions span residues 116–144 (SHFP…QKPL) and 163–188 (IQSP…KPEK). Phe125 is modified (phenylalanine amide). The propeptide occupies 128–188 (TTARSPKTPA…TDDAERKPEK (61 aa)).

This sequence belongs to the FARP (FMRFamide related peptide) family.

The protein localises to the secreted. In terms of biological role, efficiently inhibits forskolin-induced production of cAMP. Acts as a potent negative regulator of gonadotropin synthesis and secretion. Induces secretion of prolactin. Efficiently inhibits forskolin-induced production of cAMP. Blocks morphine-induced analgesia. In Mus musculus (Mouse), this protein is Pro-FMRFamide-related neuropeptide VF (Npvf).